The following is a 602-amino-acid chain: Translation factor GUF1 homolog, organellar chromatophore (602 aa).

A tr-type G domain is found at 7 to 189 (SRIRNFCIIA…AIVERIPPPV (183 aa)). GTP is bound by residues 16–23 (AHIDHGKS), 82–86 (DTPGH), and 136–139 (NKID).

Belongs to the TRAFAC class translation factor GTPase superfamily. Classic translation factor GTPase family. LepA subfamily.

The protein resides in the plastid. It is found in the organellar chromatophore. It catalyses the reaction GTP + H2O = GDP + phosphate + H(+). Promotes protein synthesis. May act as a fidelity factor of the translation reaction, by catalyzing a one-codon backward translocation of tRNAs on improperly translocated ribosomes. This chain is Translation factor GUF1 homolog, organellar chromatophore, found in Paulinella chromatophora.